The sequence spans 354 residues: 3-isopropylmalate dehydrogenase (354 aa).

Position 76 to 87 (76 to 87 (GPRWDGAKERPE)) interacts with NAD(+). Substrate-binding residues include Arg94, Arg104, Arg130, and Asp215. Positions 215, 239, and 243 each coordinate Mg(2+). NAD(+) is bound at residue 273–285 (GSAPDIAGKNKAN).

This sequence belongs to the isocitrate and isopropylmalate dehydrogenases family. LeuB type 1 subfamily. Homodimer. It depends on Mg(2+) as a cofactor. Mn(2+) is required as a cofactor.

It localises to the cytoplasm. It carries out the reaction (2R,3S)-3-isopropylmalate + NAD(+) = 4-methyl-2-oxopentanoate + CO2 + NADH. The protein operates within amino-acid biosynthesis; L-leucine biosynthesis; L-leucine from 3-methyl-2-oxobutanoate: step 3/4. In terms of biological role, catalyzes the oxidation of 3-carboxy-2-hydroxy-4-methylpentanoate (3-isopropylmalate) to 3-carboxy-4-methyl-2-oxopentanoate. The product decarboxylates to 4-methyl-2 oxopentanoate. This Bacillus anthracis protein is 3-isopropylmalate dehydrogenase.